The sequence spans 473 residues: Adenosylhomocysteinase (473 aa).

Residues Thr-60, Asp-135, and Glu-197 each contribute to the substrate site. 198–200 is an NAD(+) binding site; that stretch reads TTT. Substrate contacts are provided by Lys-227 and Asp-231. NAD(+) contacts are provided by residues Asn-232, 261-266, Glu-284, Asn-319, 340-342, and Asn-385; these read GFGDVG and IGH.

Belongs to the adenosylhomocysteinase family. It depends on NAD(+) as a cofactor.

It is found in the cytoplasm. It catalyses the reaction S-adenosyl-L-homocysteine + H2O = L-homocysteine + adenosine. The protein operates within amino-acid biosynthesis; L-homocysteine biosynthesis; L-homocysteine from S-adenosyl-L-homocysteine: step 1/1. Functionally, may play a key role in the regulation of the intracellular concentration of adenosylhomocysteine. This Bradyrhizobium sp. (strain BTAi1 / ATCC BAA-1182) protein is Adenosylhomocysteinase.